Here is a 662-residue protein sequence, read N- to C-terminus: DNA ligase (662 aa).

NAD(+) is bound by residues 31-35, 80-81, and Glu-109; these read DYEYD and SL. Lys-111 serves as the catalytic N6-AMP-lysine intermediate. NAD(+)-binding residues include Arg-132, Glu-166, Lys-282, and Lys-306. Positions 400, 403, 418, and 423 each coordinate Zn(2+). The 82-residue stretch at 581–662 folds into the BRCT domain; the sequence is KVNNIFEGKT…FEEMLKGENI (82 aa).

Belongs to the NAD-dependent DNA ligase family. LigA subfamily. Mg(2+) is required as a cofactor. It depends on Mn(2+) as a cofactor.

It catalyses the reaction NAD(+) + (deoxyribonucleotide)n-3'-hydroxyl + 5'-phospho-(deoxyribonucleotide)m = (deoxyribonucleotide)n+m + AMP + beta-nicotinamide D-nucleotide.. In terms of biological role, DNA ligase that catalyzes the formation of phosphodiester linkages between 5'-phosphoryl and 3'-hydroxyl groups in double-stranded DNA using NAD as a coenzyme and as the energy source for the reaction. It is essential for DNA replication and repair of damaged DNA. The polypeptide is DNA ligase (Thermoanaerobacter pseudethanolicus (strain ATCC 33223 / 39E) (Clostridium thermohydrosulfuricum)).